The following is a 228-amino-acid chain: MVSSTKIAQMIDHTLLKATATYADIEKLCQEAKEFNFKSVCVNPAFVPFASQLLKDSEIKVCTVIGFPLGATSTAVKAYEASWAVENGALEVDMVINIGALKAGRYEEVLEDIKEVVSAAKGKNPTVVVKVIIETCYLTDEEKIKACELAVEAGADFVKTSTGFGTGGATVEDVRLMKRTVGEKAEVKASGGIRSFADAIKMIEAGATRLGTSSGVSIMQGLVSGEDY.

Residue Asp-93 is the Proton donor/acceptor of the active site. The Schiff-base intermediate with acetaldehyde role is filled by Lys-159. Lys-188 functions as the Proton donor/acceptor in the catalytic mechanism.

This sequence belongs to the DeoC/FbaB aldolase family. DeoC type 1 subfamily.

The protein resides in the cytoplasm. It catalyses the reaction 2-deoxy-D-ribose 5-phosphate = D-glyceraldehyde 3-phosphate + acetaldehyde. It participates in carbohydrate degradation; 2-deoxy-D-ribose 1-phosphate degradation; D-glyceraldehyde 3-phosphate and acetaldehyde from 2-deoxy-alpha-D-ribose 1-phosphate: step 2/2. In terms of biological role, catalyzes a reversible aldol reaction between acetaldehyde and D-glyceraldehyde 3-phosphate to generate 2-deoxy-D-ribose 5-phosphate. In Carboxydothermus hydrogenoformans (strain ATCC BAA-161 / DSM 6008 / Z-2901), this protein is Deoxyribose-phosphate aldolase.